Consider the following 315-residue polypeptide: Fructose-1,6-bisphosphatase class 1 (315 aa).

4 residues coordinate Mg(2+): Glu90, Asp111, Leu113, and Asp114. Substrate-binding positions include 114–117 (DGSS), Tyr222, and Lys253. Glu259 contributes to the Mg(2+) binding site.

It belongs to the FBPase class 1 family. As to quaternary structure, homotetramer. Mg(2+) is required as a cofactor.

Its subcellular location is the cytoplasm. It carries out the reaction beta-D-fructose 1,6-bisphosphate + H2O = beta-D-fructose 6-phosphate + phosphate. Its pathway is carbohydrate biosynthesis; gluconeogenesis. This chain is Fructose-1,6-bisphosphatase class 1, found in Trichlorobacter lovleyi (strain ATCC BAA-1151 / DSM 17278 / SZ) (Geobacter lovleyi).